A 196-amino-acid polypeptide reads, in one-letter code: Ribosome maturation factor RimP (196 aa).

The tract at residues 163–196 (GLAPSKPTGPAPKRPKPNTNSSSNEPAAKKPRAE) is disordered.

It belongs to the RimP family.

The protein resides in the cytoplasm. Functionally, required for maturation of 30S ribosomal subunits. This Stenotrophomonas maltophilia (strain K279a) protein is Ribosome maturation factor RimP.